We begin with the raw amino-acid sequence, 351 residues long: uncharacterized protein (351 aa).

The 56-residue stretch at 14–69 (PRLADIAAQAQVSEATASRVLNGRPASRXSTRQRVLAALDLLGYERPTRLRRRSAG) folds into the HTH lacI-type domain. A DNA-binding region (H-T-H motif) is located at residues 16-35 (LADIAAQAQVSEATASRVLN).

Its function is as follows. Putative sugar-binding regulatory protein for the alpha-amylase gene. This is an uncharacterized protein from Streptomyces limosus (Streptomyces albidoflavus).